Consider the following 647-residue polypeptide: MGSTVILSSDDEDSDISESEMDEYGDKMYLNLKGGKLKVRLSPQAFICPYCPNKKKTSFQYKDLLQHASGVGNSNSDKRSAKEKASHLALVKYLQQDLADSASEAEPSSKRQKNGNPIQDCDHDEKLVYPWKGIVVNIPTTKAQDGRSAGESGSKLRDEYILRGFNPTRVRPLWNYLGHSGTAIVEFNKDWNGLHNGLLFDKAYTVDGHGKKDWLKKDGPKLGLYGWIARADDYNGNNIIGENLRKTGDLKTIAELTEEEARKQELLVQNLRQLVEEKKKDMKEIEELCSVKSEELNQLMEEKEKNQQKHYRELNAIQERTMSHIQKIVDDHEKLKRLLESERKKLEIKCNELAKREVHNGTERMKLSEDLEQNASKNSSLELAAMEQQKADEEVKKLAEDQRRQKEELHEKIIRLERQRDQKQAIELEVEQLKGQLNVMKHMASDGDAEVVKEVDIIFKDLGEKEAQLADLDKFNQTLILRERRTNDELQEAHKELVNIMKEWNTNIGVKRMGELVTKPFVDAMQQKYCQQDVEDRAVEVLQLWEHYLKDSDWHPFKRVKLENEDREVEVIDDRDEKLRELKADLGDGPYNAVTKALLEINEYNPSGRYITTELWNFKADKKATLEEGVTCLLDQWEKAKRKRGMA.

2 disordered regions span residues 1 to 20 (MGST…SESE) and 101 to 123 (SASE…DCDH). Acidic residues predominate over residues 9–20 (SDDEDSDISESE). The stretch at 253-508 (IAELTEEEAR…NIMKEWNTNI (256 aa)) forms a coiled coil.

Interacts with FMD1/IDNL1. Forms a complex with FMD1/IDNL1 and FMD2/INDL2. Can form homodimers. Interacts with MORC6.

Forms a complex with FDM1/IDNL1 and FDM2/IDNL2 that is required for RNA-directed DNA methylation (RdDM) and that functions at a downstream step of the RdDM pathway and downstream of small interfering RNA (siRNA) formation. Required for de novo DNA methylation, siRNA accumulation and siRNA-mediated maintenance methylation. Required for several post-transcriptional gene silencing pathways. Binds double-stranded RNAs (dsRNAs) with 5'-overhangs through its XS domain. Binds long non-coding RNA (lncRNA) in an AGO4-dependent manner and associates with DRM2, resulting in DNA methylation of RdDM target loci. Mediates the silencing of a subset of MORC6 target loci. The sequence is that of Protein INVOLVED IN DE NOVO 2 from Arabidopsis thaliana (Mouse-ear cress).